Reading from the N-terminus, the 234-residue chain is Small ribosomal subunit protein uS2 (234 aa).

Belongs to the universal ribosomal protein uS2 family.

The chain is Small ribosomal subunit protein uS2 from Prochlorococcus marinus (strain MIT 9515).